The sequence spans 309 residues: Taste receptor type 2 member 124 (309 aa).

Over 1 to 7 (MVPVLHS) the chain is Extracellular. A helical membrane pass occupies residues 8–28 (LSTIILIAEFVWGNLSNGLIV). Over 29-46 (LKNCIDWINKKELSTVDQ) the chain is Cytoplasmic. A helical membrane pass occupies residues 47-67 (ILIVLAISRISLIWETLIIWV). The Extracellular portion of the chain corresponds to 68 to 86 (KDQLISSITIEELKIIVFS). Residues 87–107 (FILSSHFSLWLATALSIFYLF) traverse the membrane as a helical segment. Residues 108–127 (RIPNCYWQIFLYLKWRIKQL) lie on the Cytoplasmic side of the membrane. A helical membrane pass occupies residues 128-148 (IVHMLLGSLVFLVANMIQITI). Residues 149–183 (TLEERFYQYGGNTSVNSMETEFSILIELMLFNMTM) are Extracellular-facing. Asn-160 and Asn-180 each carry an N-linked (GlcNAc...) asparagine glycan. Residues 184–204 (FSIIPFSLALISFLLLIFSLW) form a helical membrane-spanning segment. The Cytoplasmic segment spans residues 205-230 (KHLQKMPLNSRGDRDPSATAHRNALR). A helical membrane pass occupies residues 231 to 251 (ILVSFLLLYTIYFLSLLISWV). The Extracellular portion of the chain corresponds to 252-261 (AQKNQSELVH). A glycan (N-linked (GlcNAc...) asparagine) is linked at Asn-255. Residues 262-282 (IICMITSLVYPSFHSYILILG) form a helical membrane-spanning segment. The Cytoplasmic portion of the chain corresponds to 283-309 (NYKLKQTSLWVMRQLGCRMKRQNTPTT).

It belongs to the G-protein coupled receptor T2R family.

The protein localises to the membrane. Putative taste receptor which may play a role in the perception of bitterness. This chain is Taste receptor type 2 member 124, found in Mus musculus (Mouse).